The primary structure comprises 932 residues: 2-oxoglutarate dehydrogenase E1 component (932 aa).

This sequence belongs to the alpha-ketoglutarate dehydrogenase family. Homodimer. Part of the 2-oxoglutarate dehydrogenase (OGDH) complex composed of E1 (2-oxoglutarate dehydrogenase), E2 (dihydrolipoamide succinyltransferase) and E3 (dihydrolipoamide dehydrogenase); the complex contains multiple copies of the three enzymatic components (E1, E2 and E3). It depends on thiamine diphosphate as a cofactor.

It catalyses the reaction N(6)-[(R)-lipoyl]-L-lysyl-[protein] + 2-oxoglutarate + H(+) = N(6)-[(R)-S(8)-succinyldihydrolipoyl]-L-lysyl-[protein] + CO2. Functionally, E1 component of the 2-oxoglutarate dehydrogenase (OGDH) complex which catalyzes the decarboxylation of 2-oxoglutarate, the first step in the conversion of 2-oxoglutarate to succinyl-CoA and CO(2). In Staphylococcus aureus (strain MW2), this protein is 2-oxoglutarate dehydrogenase E1 component.